The following is a 398-amino-acid chain: Carbamoyl phosphate synthase small chain (398 aa).

CPSase stretches follow at residues 1 to 205 and 1 to 207; these read MTQT…TNDA and MTQT…DACN. L-glutamine is bound by residues Ser60, Gly257, and Gly259. In terms of domain architecture, Glutamine amidotransferase type-1 spans 209-397; that stretch reads HIVAIDYGIK…FNLIMDYKRT (189 aa). Cys286 acts as the Nucleophile in catalysis. L-glutamine is bound by residues Leu287, Gln290, Asn328, Gly330, and Phe331. Residues His370 and Glu372 contribute to the active site.

It belongs to the CarA family. As to quaternary structure, composed of two chains; the small (or glutamine) chain promotes the hydrolysis of glutamine to ammonia, which is used by the large (or ammonia) chain to synthesize carbamoyl phosphate. Tetramer of heterodimers (alpha,beta)4.

It carries out the reaction hydrogencarbonate + L-glutamine + 2 ATP + H2O = carbamoyl phosphate + L-glutamate + 2 ADP + phosphate + 2 H(+). It catalyses the reaction L-glutamine + H2O = L-glutamate + NH4(+). Its pathway is amino-acid biosynthesis; L-arginine biosynthesis; carbamoyl phosphate from bicarbonate: step 1/1. It participates in pyrimidine metabolism; UMP biosynthesis via de novo pathway; (S)-dihydroorotate from bicarbonate: step 1/3. In terms of biological role, small subunit of the glutamine-dependent carbamoyl phosphate synthetase (CPSase). CPSase catalyzes the formation of carbamoyl phosphate from the ammonia moiety of glutamine, carbonate, and phosphate donated by ATP, constituting the first step of 2 biosynthetic pathways, one leading to arginine and/or urea and the other to pyrimidine nucleotides. The small subunit (glutamine amidotransferase) binds and cleaves glutamine to supply the large subunit with the substrate ammonia. The sequence is that of Carbamoyl phosphate synthase small chain from Bartonella quintana (strain Toulouse) (Rochalimaea quintana).